Reading from the N-terminus, the 424-residue chain is Tyrosine--tRNA ligase (424 aa).

Tyrosine 37 contributes to the L-tyrosine binding site. The 'HIGH' region signature appears at 42–51; it reads PTADSLHLGH. L-tyrosine is bound by residues tyrosine 175 and glutamine 179. A 'KMSKS' region motif is present at residues 235–239; that stretch reads KFGKT. Lysine 238 contributes to the ATP binding site. The 58-residue stretch at 357–414 folds into the S4 RNA-binding domain; it reads ADLQQALVNAELVPSRGQARTMIGSNAVAINGEKQADPEYVFTDADRLFGRYTLLRRG.

This sequence belongs to the class-I aminoacyl-tRNA synthetase family. TyrS type 1 subfamily. In terms of assembly, homodimer.

Its subcellular location is the cytoplasm. The catalysed reaction is tRNA(Tyr) + L-tyrosine + ATP = L-tyrosyl-tRNA(Tyr) + AMP + diphosphate + H(+). Catalyzes the attachment of tyrosine to tRNA(Tyr) in a two-step reaction: tyrosine is first activated by ATP to form Tyr-AMP and then transferred to the acceptor end of tRNA(Tyr). This chain is Tyrosine--tRNA ligase, found in Yersinia pseudotuberculosis serotype O:1b (strain IP 31758).